Consider the following 333-residue polypeptide: Transcription termination factor MTERF6, chloroplastic/mitochondrial (333 aa).

It belongs to the mTERF family.

The protein localises to the plastid. It is found in the chloroplast. Its subcellular location is the mitochondrion. In terms of biological role, transcription termination factor essential for chloroplast development. Required for maturation of 16S rRNA, 18S rRNA and 23S rRNA in the chloroplast. Binds to a specific region within the tRNA(Ile)(GAU) gene at a position adjacent to and downstream of the 16S rRNA gene. Required for the maturation of tRNA(Ile)(GAU). Binds to double-stranded DNA. In Arabidopsis thaliana (Mouse-ear cress), this protein is Transcription termination factor MTERF6, chloroplastic/mitochondrial.